A 739-amino-acid polypeptide reads, in one-letter code: Potassium transporter 26 (739 aa).

Residues 1-81 (MEYHHRPHSP…RQVALLSFQS (81 aa)) lie on the Cytoplasmic side of the membrane. A helical transmembrane segment spans residues 82-102 (LGVVYGDLGTSPLYVFSSISL). Residues 103-112 (DDPGEADFVG) are Extracellular-facing. A helical transmembrane segment spans residues 113-133 (ILSIILWTFTMICLVKYVFIV). The Cytoplasmic segment spans residues 134 to 198 (LKADDHGEGG…KFLEQSTKWQ (65 aa)). Residues 199-219 (AVITYIVLAGTCMVLGDGALT) traverse the membrane as a helical segment. At 220-236 (PAISVLSAVQGIQSRSS) the chain is on the extracellular side. The chain crosses the membrane as a helical span at residues 237–257 (SITQAHVVLLSVIILFILFFF). Topologically, residues 258–268 (QKHGTSKVSFT) are cytoplasmic. Residues 269-289 (FSPIMILWFTFVAFIGLYNII) form a helical membrane-spanning segment. The Extracellular segment spans residues 290-318 (KHYPPILKAVSPHYIIIYFIRNKRAAWET). A helical transmembrane segment spans residues 319–339 (LGAIVLCITGAEAMFADLGHF). The Cytoplasmic segment spans residues 340 to 347 (NKSSIQMA). Residues 348–368 (FSVIVYPSMILAYAGQAAFLV) form a helical membrane-spanning segment. The Extracellular portion of the chain corresponds to 369–385 (KNPSKLSTTFYSSTPEP). Residues 386-406 (LFWPMFIIATLAAIVASQALI) form a helical membrane-spanning segment. Residues 407 to 437 (SASFSIIRQSIALGCFPRVTMKHTSGKHEGQ) lie on the Cytoplasmic side of the membrane. The helical transmembrane segment at 438–458 (VYSPEINYFLMVACILITVGF) threads the bilayer. The Extracellular portion of the chain corresponds to 459–469 (KGGPEIGQAFG). The chain crosses the membrane as a helical span at residues 470-490 (VAVIFVMLFTTNLMTVVMLII). The Cytoplasmic portion of the chain corresponds to 491–494 (WESN). The chain crosses the membrane as a helical span at residues 495-515 (IALASLFFVFFFSIEGIYMTS). The Extracellular segment spans residues 516 to 519 (LMNK). The chain crosses the membrane as a helical span at residues 520–540 (ILQGGWVPFAITAFFLIITLS). Over 541-739 (WTYGRSKKGE…TLQVGMLYEI (199 aa)) the chain is Cytoplasmic.

The protein belongs to the HAK/KUP transporter (TC 2.A.72.3) family.

The protein localises to the membrane. Functionally, high-affinity potassium transporter. In Oryza sativa subsp. japonica (Rice), this protein is Potassium transporter 26 (HAK26).